A 253-amino-acid polypeptide reads, in one-letter code: Acetylglutamate kinase (253 aa).

Residues 40–41 (GG), R62, and N154 contribute to the substrate site.

Belongs to the acetylglutamate kinase family. ArgB subfamily.

The protein localises to the cytoplasm. It carries out the reaction N-acetyl-L-glutamate + ATP = N-acetyl-L-glutamyl 5-phosphate + ADP. The protein operates within amino-acid biosynthesis; L-arginine biosynthesis; N(2)-acetyl-L-ornithine from L-glutamate: step 2/4. In terms of biological role, catalyzes the ATP-dependent phosphorylation of N-acetyl-L-glutamate. This chain is Acetylglutamate kinase, found in Staphylococcus saprophyticus subsp. saprophyticus (strain ATCC 15305 / DSM 20229 / NCIMB 8711 / NCTC 7292 / S-41).